Consider the following 232-residue polypeptide: Pyridoxal 5'-phosphate synthase subunit PdxS (232 aa).

Residue Lys23 is the Schiff-base intermediate with D-ribose 5-phosphate of the active site. Residue Gly95 coordinates D-ribose 5-phosphate. Residue Arg107 coordinates D-glyceraldehyde 3-phosphate. D-ribose 5-phosphate contacts are provided by residues Gly156 and Gly177 to Ser178.

This sequence belongs to the PdxS/SNZ family. In the presence of PdxT, forms a dodecamer of heterodimers.

It catalyses the reaction aldehydo-D-ribose 5-phosphate + D-glyceraldehyde 3-phosphate + L-glutamine = pyridoxal 5'-phosphate + L-glutamate + phosphate + 3 H2O + H(+). Its pathway is cofactor biosynthesis; pyridoxal 5'-phosphate biosynthesis. Its function is as follows. Catalyzes the formation of pyridoxal 5'-phosphate from ribose 5-phosphate (RBP), glyceraldehyde 3-phosphate (G3P) and ammonia. The ammonia is provided by the PdxT subunit. Can also use ribulose 5-phosphate and dihydroxyacetone phosphate as substrates, resulting from enzyme-catalyzed isomerization of RBP and G3P, respectively. The polypeptide is Pyridoxal 5'-phosphate synthase subunit PdxS (Clostridium novyi).